The following is a 362-amino-acid chain: Peptide chain release factor 1 (362 aa).

Gln237 is modified (N5-methylglutamine).

It belongs to the prokaryotic/mitochondrial release factor family. In terms of processing, methylated by PrmC. Methylation increases the termination efficiency of RF1.

The protein localises to the cytoplasm. Its function is as follows. Peptide chain release factor 1 directs the termination of translation in response to the peptide chain termination codons UAG and UAA. The protein is Peptide chain release factor 1 of Marinomonas sp. (strain MWYL1).